The primary structure comprises 36 residues: Gloverin (36 aa).

Its subcellular location is the secreted. Functionally, antibacterial protein. This chain is Gloverin, found in Heliothis virescens (Tobacco budworm moth).